Reading from the N-terminus, the 301-residue chain is Nucleotide-binding protein ELI_02120 (301 aa).

12–19 (GMSGAGKS) contacts ATP. 62-65 (DSRT) is a binding site for GTP.

It belongs to the RapZ-like family.

Its function is as follows. Displays ATPase and GTPase activities. The chain is Nucleotide-binding protein ELI_02120 from Erythrobacter litoralis (strain HTCC2594).